The sequence spans 74 residues: Delta-stichotoxin-Sgt2a (74 aa).

Residues 1–19 form the signal peptide; it reads MNRLIILVFAAVFLTLASA. Positions 20–28 are excised as a propeptide; it reads EVSEDVNMA. Disulfide bonds link Cys34/Cys71, Cys36/Cys64, and Cys57/Cys72.

The protein belongs to the sea anemone sodium channel inhibitory toxin family. Type I subfamily.

It is found in the secreted. Its subcellular location is the nematocyst. Functionally, binds specifically to voltage-gated sodium channels (Nav), thereby delaying their inactivation during signal transduction. In Stichodactyla gigantea (Giant carpet anemone), this protein is Delta-stichotoxin-Sgt2a.